Reading from the N-terminus, the 157-residue chain is SsrA-binding protein (157 aa).

Belongs to the SmpB family.

The protein localises to the cytoplasm. Its function is as follows. Required for rescue of stalled ribosomes mediated by trans-translation. Binds to transfer-messenger RNA (tmRNA), required for stable association of tmRNA with ribosomes. tmRNA and SmpB together mimic tRNA shape, replacing the anticodon stem-loop with SmpB. tmRNA is encoded by the ssrA gene; the 2 termini fold to resemble tRNA(Ala) and it encodes a 'tag peptide', a short internal open reading frame. During trans-translation Ala-aminoacylated tmRNA acts like a tRNA, entering the A-site of stalled ribosomes, displacing the stalled mRNA. The ribosome then switches to translate the ORF on the tmRNA; the nascent peptide is terminated with the 'tag peptide' encoded by the tmRNA and targeted for degradation. The ribosome is freed to recommence translation, which seems to be the essential function of trans-translation. The polypeptide is SsrA-binding protein (Bacillus licheniformis (strain ATCC 14580 / DSM 13 / JCM 2505 / CCUG 7422 / NBRC 12200 / NCIMB 9375 / NCTC 10341 / NRRL NRS-1264 / Gibson 46)).